Reading from the N-terminus, the 247-residue chain is Phosphate import ATP-binding protein PstB (247 aa).

The region spanning 2-242 (CRDVNVYYGE…PRHPLTEDYI (241 aa)) is the ABC transporter domain. Position 32–39 (32–39 (GPSGCGKS)) interacts with ATP.

The protein belongs to the ABC transporter superfamily. Phosphate importer (TC 3.A.1.7) family. As to quaternary structure, the complex is composed of two ATP-binding proteins (PstB), two transmembrane proteins (PstC and PstA) and a solute-binding protein (PstS).

It localises to the cell inner membrane. It carries out the reaction phosphate(out) + ATP + H2O = ADP + 2 phosphate(in) + H(+). Functionally, part of the ABC transporter complex PstSACB involved in phosphate import. Responsible for energy coupling to the transport system. This Methylococcus capsulatus (strain ATCC 33009 / NCIMB 11132 / Bath) protein is Phosphate import ATP-binding protein PstB.